Here is a 51-residue protein sequence, read N- to C-terminus: Insulin (51 aa).

Cystine bridges form between Cys-7/Cys-37, Cys-19/Cys-50, and Cys-36/Cys-41.

It belongs to the insulin family. In terms of assembly, heterodimer of a B chain and an A chain linked by two disulfide bonds.

It localises to the secreted. In terms of biological role, insulin decreases blood glucose concentration. It increases cell permeability to monosaccharides, amino acids and fatty acids. It accelerates glycolysis, the pentose phosphate cycle, and glycogen synthesis in liver. In Camelus dromedarius (Dromedary), this protein is Insulin (INS).